The following is a 417-amino-acid chain: Serine--tRNA ligase (417 aa).

L-serine is bound at residue 226 to 228 (TSE). Residues 257-259 (RRE) and Val-273 each bind ATP. Glu-280 serves as a coordination point for L-serine. 344 to 347 (EVTS) is an ATP binding site. Thr-379 lines the L-serine pocket.

Belongs to the class-II aminoacyl-tRNA synthetase family. Type-1 seryl-tRNA synthetase subfamily. As to quaternary structure, homodimer. The tRNA molecule binds across the dimer.

The protein localises to the cytoplasm. It catalyses the reaction tRNA(Ser) + L-serine + ATP = L-seryl-tRNA(Ser) + AMP + diphosphate + H(+). It carries out the reaction tRNA(Sec) + L-serine + ATP = L-seryl-tRNA(Sec) + AMP + diphosphate + H(+). It participates in aminoacyl-tRNA biosynthesis; selenocysteinyl-tRNA(Sec) biosynthesis; L-seryl-tRNA(Sec) from L-serine and tRNA(Sec): step 1/1. Functionally, catalyzes the attachment of serine to tRNA(Ser). Is also able to aminoacylate tRNA(Sec) with serine, to form the misacylated tRNA L-seryl-tRNA(Sec), which will be further converted into selenocysteinyl-tRNA(Sec). This chain is Serine--tRNA ligase, found in Tropheryma whipplei (strain TW08/27) (Whipple's bacillus).